The sequence spans 224 residues: Urease accessory protein UreF 2 (224 aa).

The protein belongs to the UreF family. UreD, UreF and UreG form a complex that acts as a GTP-hydrolysis-dependent molecular chaperone, activating the urease apoprotein by helping to assemble the nickel containing metallocenter of UreC. The UreE protein probably delivers the nickel.

It localises to the cytoplasm. Its function is as follows. Required for maturation of urease via the functional incorporation of the urease nickel metallocenter. The chain is Urease accessory protein UreF 2 from Pseudomonas syringae pv. tomato (strain ATCC BAA-871 / DC3000).